The chain runs to 194 residues: Large ribosomal subunit protein eL15 (194 aa).

The interval 158–194 (ANRGLTSAGKKGRGLMYKGKGAEKARPGVRANGKKTK) is disordered.

Belongs to the eukaryotic ribosomal protein eL15 family.

The sequence is that of Large ribosomal subunit protein eL15 from Methanococcus maripaludis (strain DSM 14266 / JCM 13030 / NBRC 101832 / S2 / LL).